The following is a 297-amino-acid chain: uncharacterized protein (297 aa).

6 helical membrane-spanning segments follow: residues 26 to 48 (FVLHGLSVIAVSIATLLSAIYAI), 80 to 102 (NIELLGVTFVFGLVIVAALAALF), 134 to 156 (LFKFELILTLLIGIAFIPLINLG), 185 to 205 (LGIFAITIQFLFTFVPYAIVI), 225 to 247 (LVDTIIMWLLVGLAGMALQVAAY), and 262 to 284 (LVAVILGWVAVMPITTCWWVELY).

It is found in the cell membrane. This is an uncharacterized protein from Archaeoglobus fulgidus (strain ATCC 49558 / DSM 4304 / JCM 9628 / NBRC 100126 / VC-16).